The sequence spans 222 residues: Charged multivesicular body protein 4b (222 aa).

Disordered regions lie at residues 1 to 21 (MSLIGKLFGTGGKGAKGPSPQ) and 183 to 222 (GPETVPLPNVPAAVLPAKPVKKKQEEDDDDMRELENWATA). A coiled-coil region spans residues 21-182 (QEAIQKLRDT…ELDKNLLEVQ (162 aa)). The segment covering 188–200 (PLPNVPAAVLPAK) has biased composition (low complexity).

It belongs to the SNF7 family. Probable core component of the endosomal sorting required for transport complex III (ESCRT-III). ESCRT-III components are thought to multimerize to form a flat lattice on the perimeter membrane of the endosome.

The protein resides in the cytoplasm. It is found in the cytosol. It localises to the late endosome membrane. The protein localises to the midbody. Its function is as follows. Probable core component of the endosomal sorting required for transport complex III (ESCRT-III) which is involved in multivesicular bodies (MVBs) formation and sorting of endosomal cargo proteins into MVBs. MVBs contain intraluminal vesicles (ILVs) that are generated by invagination and scission from the limiting membrane of the endosome and mostly are delivered to lysosomes enabling degradation of membrane proteins, such as stimulated growth factor receptors, lysosomal enzymes and lipids. In Xenopus tropicalis (Western clawed frog), this protein is Charged multivesicular body protein 4b (chmp4b).